Reading from the N-terminus, the 356-residue chain is Cysteine proteinase 3 (356 aa).

An N-terminal signal peptide occupies residues 1–16 (MSRLSLVLILVAGLFA). The propeptide at 17 to 138 (TALAGPATFA…KGNLKLTNVV (122 aa)) is activation peptide. A glycan (N-linked (GlcNAc...) asparagine) is linked at Asn-123. 2 disulfide bridges follow: Cys-160–Cys-203 and Cys-194–Cys-236. Residue Cys-163 is part of the active site. N-linked (GlcNAc...) asparagine glycosylation occurs at Asn-252. Cys-294 and Cys-344 are joined by a disulfide. Catalysis depends on residues His-303 and Asn-323.

The protein belongs to the peptidase C1 family. Predominantly expressed in stem and root.

It localises to the vacuole. The sequence is that of Cysteine proteinase 3 (CYP-3) from Solanum lycopersicum (Tomato).